We begin with the raw amino-acid sequence, 443 residues long: Protoheme IX farnesyltransferase, mitochondrial (443 aa).

Positions 68 to 113 (LSQRVKPKPEPPASPFLEHTSSGQARADEDELPSFPAPSRPLSRKP) are disordered. The next 7 helical transmembrane spans lie at 174–194 (AGFALAPGPFDWSCFLLTSLG), 230–250 (ISPLLAVSFATCCAVPGVALL), 252–272 (WGVNPLTGALGVFNIFLYTCC), 286–306 (VGAVVGAIPPVMGWTAATGSL), 308–328 (AGALLLGGILYSWQFPHFNAL), 363–383 (LIALSTAAPVLDITTWVFPVI), and 410–430 (LFFCSLWHLPLLLLLMLTCKQ).

The protein belongs to the UbiA prenyltransferase family.

The protein localises to the mitochondrion membrane. The enzyme catalyses heme b + (2E,6E)-farnesyl diphosphate + H2O = Fe(II)-heme o + diphosphate. In terms of biological role, converts protoheme IX and farnesyl diphosphate to heme O. This is Protoheme IX farnesyltransferase, mitochondrial (Cox10) from Mus musculus (Mouse).